The primary structure comprises 492 residues: Catalase isozyme 1 (492 aa).

Residues histidine 65 and asparagine 138 contribute to the active site. Tyrosine 348 provides a ligand contact to heme.

This sequence belongs to the catalase family. Homotetramer. Heme serves as cofactor. As to expression, scutella, milky endosperm of immature kernels, leaves and epicotyls.

The protein localises to the peroxisome. It carries out the reaction 2 H2O2 = O2 + 2 H2O. In terms of biological role, occurs in almost all aerobically respiring organisms and serves to protect cells from the toxic effects of hydrogen peroxide. The chain is Catalase isozyme 1 (CAT1) from Zea mays (Maize).